Consider the following 554-residue polypeptide: Malate synthase 1 (554 aa).

Residue Arg177 is the Proton acceptor of the active site. Asp457 (proton donor) is an active-site residue. The short motif at 552-554 (SKL) is the SKL peroxisome targeting motif element.

The protein belongs to the malate synthase family. As to quaternary structure, interacts with PEX9.

It is found in the peroxisome matrix. It carries out the reaction glyoxylate + acetyl-CoA + H2O = (S)-malate + CoA + H(+). The protein operates within carbohydrate metabolism; glyoxylate cycle; (S)-malate from isocitrate: step 2/2. Its function is as follows. Malate synthase which takes part in the glyoxylate cycle. MLS1 activity is essential for cells to grow on oleic acid as a sole carbon source. Two steps of the glyoxylate cycle take place in the cytosol, the splitting of isocitrate into succinate and glyoxylate, and the dehydrogenation of malate to oxaloacetate. However, the formation of malate from glyoxylate and acetyl-CoA undertaken MLS1, occurs in the peroxisomes when cells are grown on oleic acid. The source of acetyl-CoA being either peroxisomal when breaking down fatty acids, or cytosolic when extra-cellular two-carbon substrates are used, therefore, although not strictly essential, the peroxisomal localization of MLS1 appears to be advantageous for cells growing on oleic acid, in that acetyl-CoA production and utilization are thereby intimately compartmentalized together to increase efficiency. The chain is Malate synthase 1 from Saccharomyces cerevisiae (strain ATCC 204508 / S288c) (Baker's yeast).